The chain runs to 248 residues: Triosephosphate isomerase (248 aa).

Residues asparagine 10 and lysine 12 each contribute to the substrate site. The Electrophile role is filled by histidine 95. Glutamate 165 serves as the catalytic Proton acceptor.

This sequence belongs to the triosephosphate isomerase family. In terms of assembly, homodimer.

It carries out the reaction D-glyceraldehyde 3-phosphate = dihydroxyacetone phosphate. It functions in the pathway carbohydrate biosynthesis; gluconeogenesis. Its pathway is carbohydrate degradation; glycolysis; D-glyceraldehyde 3-phosphate from glycerone phosphate: step 1/1. The polypeptide is Triosephosphate isomerase (TPI1) (Debaryomyces hansenii (strain ATCC 36239 / CBS 767 / BCRC 21394 / JCM 1990 / NBRC 0083 / IGC 2968) (Yeast)).